A 114-amino-acid chain; its full sequence is uncharacterized protein (114 aa).

The next 2 membrane-spanning stretches (helical) occupy residues 14–34 and 75–95; these read VMSA…CFLL and VIII…HPVA.

The protein localises to the membrane. This is an uncharacterized protein from Homo sapiens (Human).